The sequence spans 914 residues: Ral guanine nucleotide dissociation stimulator (914 aa).

The 138-residue stretch at 112–249 (KVRTVKAGTL…RAHLLLAQLE (138 aa)) folds into the N-terminal Ras-GEF domain. The segment at 280 to 365 (ARAPSPVPAP…APVPSLQPSW (86 aa)) is disordered. Positions 282–300 (APSPVPAPAPEPEPAPTPA) are enriched in pro residues. The segment covering 304 to 338 (ELEVAPAPAPELQQAPEPAVGLESAPAPALELEPA) has biased composition (low complexity). In terms of domain architecture, Ras-GEF spans 386–648 (PPDLVAEQFT…YNLSCELEPP (263 aa)). 2 disordered regions span residues 666 to 689 (KRWS…SKSC) and 728 to 776 (PESP…RTHK). Low complexity-rich tracts occupy residues 675 to 686 (STELSTSGSSHS) and 745 to 772 (SSPE…VAAT). The Ras-associating domain maps to 798–885 (DCCIIRVSLD…YDFVLKKRTF (88 aa)). At tyrosine 814 the chain carries Phosphotyrosine; by MET.

In terms of assembly, interacts with RIT1 and RIT2. Interacts with OOG1. Interacts with TRAF3. Interacts with HRAS. Post-translationally, phosphorylation of Tyr-814 by MET blocks HRAS binding.

It is found in the cytoplasm. Its subcellular location is the nucleus. Functions as a guanine nucleotide exchange factor (GEF) activating either RalA or RalB GTPases and plays an important role in intracellular transport. Interacts and acts as an effector molecule for R-Ras, H-Ras, K-Ras, and Rap. During bacterial clearance, recognizes 'Lys-33'-linked polyubiquitinated TRAF3 and subsequently mediates assembly of the exocyst complex. This Homo sapiens (Human) protein is Ral guanine nucleotide dissociation stimulator (RALGDS).